Consider the following 942-residue polypeptide: MKSIDIRGARTHNLKNINLILPRDKLIVITGLSGSGKSSLAFDTLYAEGQRRYVESLSAYARQFLSLMEKPDVDHIEGLSPAISIEQKSTSHNPRSTVGTITEIHDYLRLLFARVGEPRCPKHDLPLVAQTISQMVDRVMQEPEGKRLMLLAPVVRNRKGEHVKLLENLTASGYIRARINGEICDLSDPPVLELQKKHTIEVVVDRFKVRSDMMSRLAESFETALELSGSTAIIADMDDPGAPEMVFSASFACSECGYSLPELEPRLFSFNNPAGACPTCDGLGVEQYFDPAKVVQNPDVSLASGAIKGWDRRSLYYFSLLTAVASYYAFDIDTPFAQLPAKIQQIILYGSSDEIEFFYINDRDDKIQRKHTFEGVLNNMARRYKETESNAVRDELAKYINNRACLACQGSRLRQEARNVFIEQANLPEIAEKSIGEALTFFEQLELNGQRAQIAEKILKEIRERLQFLVNVGLNYLSLSRSAETLSGGEAQRIRLASQIGAGLVGVMYVLDEPSIGLHQRDNERLLNTLIHLRDLGNTVIVVEHDEDAIRAADHIVDIGPGAGVHGGQVIAQGSATEIMQIEASITGQYLAGKQKIEIPTERIPYDANKLLILSGASGNNLKHVELVIPVGLFTCITGVSGSGKSTLINDTLFPLAQNALNRAERTDVAPYQAIDGLAHFDKVIDIDQSPIGRTPRSNPATYTGLFTPIRELFAGTQEARARGYNVGRFSFNVRGGRCEACQGDGVIKVEMHFLPDVYVPCDHCKGKRYNRETLEVRYKGKTIHQVLEMTVEEAREFFDAIPAIARKLQTLIDVGLSYIRLGQSSTTLSGGEAQRVKLATELSKRDTGKTLYILDEPTTGLHFADIKQLLAVLHKLRDQGNTIVVIEHNLDVIKTADWIVDLGPEGGAGGGQIIAQGTPEDVAQQPGSHTARFLTQILAKG.

31 to 38 provides a ligand contact to ATP; sequence GLSGSGKS. The C4-type zinc-finger motif lies at 253–280; it reads CSECGYSLPELEPRLFSFNNPAGACPTC. ABC transporter domains lie at 310–586 and 606–936; these read WDRR…EASI and YDAN…RFLT. 639–646 contacts ATP; sequence GVSGSGKS. The C4-type zinc-finger motif lies at 739 to 765; it reads CEACQGDGVIKVEMHFLPDVYVPCDHC.

Belongs to the ABC transporter superfamily. UvrA family. Forms a heterotetramer with UvrB during the search for lesions.

It is found in the cytoplasm. In terms of biological role, the UvrABC repair system catalyzes the recognition and processing of DNA lesions. UvrA is an ATPase and a DNA-binding protein. A damage recognition complex composed of 2 UvrA and 2 UvrB subunits scans DNA for abnormalities. When the presence of a lesion has been verified by UvrB, the UvrA molecules dissociate. The protein is UvrABC system protein A of Haemophilus ducreyi (strain 35000HP / ATCC 700724).